Consider the following 237-residue polypeptide: Ribonuclease PH (237 aa).

Residues Arg-86 and 124-126 each bind phosphate; that span reads GTR.

The protein belongs to the RNase PH family. As to quaternary structure, homohexameric ring arranged as a trimer of dimers.

It carries out the reaction tRNA(n+1) + phosphate = tRNA(n) + a ribonucleoside 5'-diphosphate. Phosphorolytic 3'-5' exoribonuclease that plays an important role in tRNA 3'-end maturation. Removes nucleotide residues following the 3'-CCA terminus of tRNAs; can also add nucleotides to the ends of RNA molecules by using nucleoside diphosphates as substrates, but this may not be physiologically important. Probably plays a role in initiation of 16S rRNA degradation (leading to ribosome degradation) during starvation. The chain is Ribonuclease PH from Methylobacterium sp. (strain 4-46).